A 546-amino-acid polypeptide reads, in one-letter code: Delta-1-pyrroline-5-carboxylate dehydrogenase (546 aa).

279–284 (KDISSN) contacts NAD(+). Catalysis depends on glutamate 297, which acts as the Proton acceptor. Cysteine 331 acts as the Nucleophile in catalysis.

Belongs to the aldehyde dehydrogenase family.

Its subcellular location is the cytoplasm. The catalysed reaction is L-glutamate 5-semialdehyde + NAD(+) + H2O = L-glutamate + NADH + 2 H(+). It functions in the pathway amino-acid degradation; L-proline degradation into L-glutamate; L-glutamate from L-proline: step 2/2. This chain is Delta-1-pyrroline-5-carboxylate dehydrogenase (pruA), found in Agaricus bisporus (White button mushroom).